Reading from the N-terminus, the 396-residue chain is ATP-dependent RNA helicase eIF4A (396 aa).

The short motif at 22-50 (HKFDELKLKEVLLRGIYGYGFVDPSAIQQ) is the Q motif element. Residues 53–223 (ILPIIEGHDV…DKFMNKPVRI (171 aa)) enclose the Helicase ATP-binding domain. 66 to 73 (AQSGTGKT) is an ATP binding site. The short motif at 171–174 (DEAD) is the DEAD box element. The 162-residue stretch at 234–395 (GIQQYYINVE…ELPANIADLF (162 aa)) folds into the Helicase C-terminal domain.

It belongs to the DEAD box helicase family. eIF4A subfamily. In terms of assembly, component of the eIF4F complex, which composition varies with external and internal environmental conditions. It is composed of at least eIF4A, eIF4E and eIF4G.

It localises to the cytoplasm. The enzyme catalyses ATP + H2O = ADP + phosphate + H(+). ATP-dependent RNA helicase which is a subunit of the eIF4F complex involved in cap recognition and is required for mRNA binding to ribosome. In the current model of translation initiation, eIF4A unwinds RNA secondary structures in the 5'-UTR of mRNAs which is necessary to allow efficient binding of the small ribosomal subunit, and subsequent scanning for the initiator codon. This is ATP-dependent RNA helicase eIF4A (TIF1) from Eremothecium gossypii (strain ATCC 10895 / CBS 109.51 / FGSC 9923 / NRRL Y-1056) (Yeast).